Here is a 328-residue protein sequence, read N- to C-terminus: Phosphatidylglycerol--prolipoprotein diacylglyceryl transferase (328 aa).

Transmembrane regions (helical) follow at residues 15–35, 57–77, and 106–126; these read VIQG…ILIS, IFMF…STLV, and GMAI…TINT. Position 156 (Arg-156) interacts with a 1,2-diacyl-sn-glycero-3-phospho-(1'-sn-glycerol). 2 consecutive transmembrane segments (helical) span residues 242-262 and 289-309; these read GFIF…IEYL and ISMG…WIIV.

Belongs to the Lgt family.

It is found in the cell inner membrane. The enzyme catalyses L-cysteinyl-[prolipoprotein] + a 1,2-diacyl-sn-glycero-3-phospho-(1'-sn-glycerol) = an S-1,2-diacyl-sn-glyceryl-L-cysteinyl-[prolipoprotein] + sn-glycerol 1-phosphate + H(+). Its pathway is protein modification; lipoprotein biosynthesis (diacylglyceryl transfer). In terms of biological role, catalyzes the transfer of the diacylglyceryl group from phosphatidylglycerol to the sulfhydryl group of the N-terminal cysteine of a prolipoprotein, the first step in the formation of mature lipoproteins. The sequence is that of Phosphatidylglycerol--prolipoprotein diacylglyceryl transferase from Borreliella burgdorferi (strain ATCC 35210 / DSM 4680 / CIP 102532 / B31) (Borrelia burgdorferi).